A 193-amino-acid polypeptide reads, in one-letter code: Putative zinc finger protein 726P1 (193 aa).

The C2H2-type 1; degenerate zinc-finger motif lies at 18-40 (YKCKKCGKTFNWSSILTNNKKIH). The C2H2-type 2; atypical zinc finger occupies 46–68 (YKCEECGKAFKQHSTLTTHKIIC). The C2H2-type 3; degenerate zinc-finger motif lies at 74 to 96 (YRCEECGKAFCQPSTLTRYKRMH). A C2H2-type 4 zinc finger spans residues 102 to 124 (YKCEECGKAFTQFSTLTKHKRIH). A C2H2-type 5; degenerate zinc finger spans residues 130-152 (YKCEESGKAFIWSSGLTEHRRVH). The C2H2-type 6 zinc-finger motif lies at 158-180 (YKCEECGKALIQFSTLTRHKRIH).

This chain is Putative zinc finger protein 726P1 (ZNF726P1), found in Homo sapiens (Human).